We begin with the raw amino-acid sequence, 188 residues long: UPF0340 protein GK3370 (188 aa).

The protein belongs to the UPF0340 family.

This chain is UPF0340 protein GK3370, found in Geobacillus kaustophilus (strain HTA426).